The primary structure comprises 245 residues: DNA polymerase sliding clamp 1 (245 aa).

This sequence belongs to the PCNA family. The subunits circularize to form a toroid; DNA passes through its center. Replication factor C (RFC) is required to load the toroid on the DNA. Forms a dimeric complex with PCNA3 and a trimeric complex with PCNA2 and PCNA3; does not form homotrimers.

Its function is as follows. Sliding clamp subunit that acts as a moving platform for DNA processing. Responsible for tethering the catalytic subunit of DNA polymerase and other proteins to DNA during high-speed replication. The trimeric complex inhibits DNA ligase and both 3'-5' and 5'-3' activity of Hel308 (Hjm) helicase, but stimulates Hjc, the Holliday junction cleavage enzyme. This Sulfurisphaera tokodaii (strain DSM 16993 / JCM 10545 / NBRC 100140 / 7) (Sulfolobus tokodaii) protein is DNA polymerase sliding clamp 1.